A 270-amino-acid chain; its full sequence is Phosphatidylglycerol--prolipoprotein diacylglyceryl transferase (270 aa).

The next 7 membrane-spanning stretches (helical) occupy residues 17 to 37 (LAIRWYGLMYLAGFIMFLWFG), 59 to 79 (MLFYGVLGVILGGRLGYVLFY), 95 to 115 (WEGGMAFHGGFLGVLIAMWVF), 129 to 149 (FIAPMIPCGLAAGRIGNFING), 175 to 195 (PSQLYQFAGEGVALFIILWLF), 202 to 222 (MGAVSGVFLIGYGAFRFLAEF), and 237 to 257 (LSMGQWLSLPMIVIGAVMVVW). Arginine 142 is a binding site for a 1,2-diacyl-sn-glycero-3-phospho-(1'-sn-glycerol).

The protein belongs to the Lgt family.

The protein localises to the cell inner membrane. The enzyme catalyses L-cysteinyl-[prolipoprotein] + a 1,2-diacyl-sn-glycero-3-phospho-(1'-sn-glycerol) = an S-1,2-diacyl-sn-glyceryl-L-cysteinyl-[prolipoprotein] + sn-glycerol 1-phosphate + H(+). The protein operates within protein modification; lipoprotein biosynthesis (diacylglyceryl transfer). Catalyzes the transfer of the diacylglyceryl group from phosphatidylglycerol to the sulfhydryl group of the N-terminal cysteine of a prolipoprotein, the first step in the formation of mature lipoproteins. This is Phosphatidylglycerol--prolipoprotein diacylglyceryl transferase from Cupriavidus metallidurans (strain ATCC 43123 / DSM 2839 / NBRC 102507 / CH34) (Ralstonia metallidurans).